Here is a 1648-residue protein sequence, read N- to C-terminus: MATDSASCEPDLSRTPGDTEGATAEAAKKEFDVDTLSKSELRMLLSVMEGELEARDLVIEALRARRKEVFIQERYGRFNLNDPFLALQRDYEAGPGDKEKPVCTNPLSILEAVMAHCRKMQERMSAQLVAAESRQKKLEMEKLQLQALEQEHKKLAAHLEEERGKNKHVVLMLVKECKQLSGKVVEEAQKLEEVMAQLEEEKKKTSELEEQLSAEKQRSSGMEAQLEKQLSEFDTEREQLRAKLSREEAHTTDLKEEIDKMKKMMEQMKKGSDGKPGLSLPRKTKDKRLASISVATEGPVTRSVACQTDVVTESTDPVKKLPLTVPIKPSTGSPLVPTNTKGNVGPSALLIRPGIDRQSSHSDLGPSPPTALPSSANRIEENGPSTGNAPDLSNSTPSTPSSTAPAAAQTPGTAPQNHSQAPTVHSLHSPCANTHPGLNPRIQAARFRFQGNANDPDQNGNNTQSPPSRDVSPTSRDNLVAKQLARNTVTQALSRFTSPQAGASSRLGVSPGGDAGTCPPVGRTGLKTPGAARVDRGNPPPIPPKKPGLSQTPSPPHPQLRASNAGAKVDNKIVASPPSTLPQGTKVVNEENVPKSSSPQLPPKPSIDLTVAPAGCPVSALATSQVGAWPAGTPGLNQPACSDSSLVIPATVAFCSSINPVSASSRSPGASDSLLVAASGWSPSLTPLLMSGGPAPLAGRPTLLQQAAAQGNVTLLSMLLNEEGLDINYSCEDGHSALYSAAKNGHTDCVRLLLNAEARVDAADKNGFTPLCVAAAQGHFECIELLTAYNANINHSAAGGQTPLYLACKNGNKECIKLLLEAGTDRSIKTRDGWTPIHAAVDTGNVDSLKLLMYHRVRAHGNSLSSEEPKSGLFSLNGGESPTGPSKPVVPADLINHADKEGWTAAHIAASKGFKNCLEVLCRHGGLEPERRDKCNRTVHDVATDDCKHLLENLNALKIPLRISVGEIQPSNDVSDDFECEHTICTLNIRKQTSWEDFSKAVSQALTNHFQAISSDGWWSLEDGTFNNATDSCIGLGTSSIRSIMLGSMPWSTGQSFSQSPWDFLKKKKVEQVLALLSGPQEGCLSSVTYASMIPLQMLQNYLRLVEQYHNVIFHGPEGSLQDYIANQLALCMKYRQMAAGFPCEIVRAEVDSGFSKEQLVDVFIRNACLIPVKQFPVKKKIIVILENLEKSSLSELLGDFLAPLENRSTESPCTFQKGNGTSECYYFHENCFLVGTIAKACLQGSDLLVQQHFRWVQLRWDCEPIQGLLQRFLRRKVVSKFRGQLPAPCDPVCKIVDWALSVWRQLNSCLARLGTPEALLGPKYFLSCPVVPGHAQATVKWMSKLWNAVIAPRVQEAILSRASMNKQPGTGQTASKKYPSQGQQAVVRAALSILLNKAVLHGCPLPRAELDQQIADFKGGSFPLSIVSSYSKKKVESGAWRKVNTSPRKKPGHFSSPTWNKPDPKREGMRNKTIPHLNTNRNSSLSKQQSLENDLSVTLTLDHRLSLGSDDEADLVKELQSMCSSKSESDISKIADSRDDLRKFDSSRTNPGTSAPLNLRTPVPQKEASPPSSRQTAECSNSKSKTEMGVSSVKSFLPVPRSKVAQCSQNTKRNSSSSNTRQLEINNNSKEENWTLDKHEQVEKPNK.

5 disordered regions span residues M1–A26, E200–H250, P322–N439, G451–R476, and A492–D608. Positions K119–G274 form a coiled coil. Composition is skewed to basic and acidic residues over residues E200–R218 and Q225–H250. Composition is skewed to polar residues over residues S330–G342 and L372–L392. A compositionally biased stretch (low complexity) spans S393–P415. The span at A492–A503 shows a compositional bias: polar residues. Position 495 is an asymmetric dimethylarginine (R495). ANK repeat units follow at residues G699–Y729, D733–A762, N766–H795, G799–I828, D832–G861, and E901–R931. Positions S1438–L1492 are disordered. The span at H1477 to L1492 shows a compositional bias: polar residues. S1510 is modified (phosphoserine). Residues S1522–K1648 are disordered. Residues S1528–S1547 are compositionally biased toward basic and acidic residues. 2 stretches are compositionally biased toward polar residues: residues S1548–P1557 and P1571–K1584. Over residues S1609–Q1623 the composition is skewed to low complexity. A compositionally biased stretch (basic and acidic residues) spans S1630 to K1648.

As to quaternary structure, interacts with CTTN/cortactin SH3 domain. Interacts with STRN, STRN4/zinedin and MOB4/phocein; this interactions mediate the association with the STRIPAK core complex and may regulate dendritic spine distribution of the STRIPAK complex in hippocampal neurons. Activation of glutamate receptors weakens the interaction with STRN and STRN4. In terms of tissue distribution, isoform 2 is predominantly expressed in brain (at protein level). In the brain, expressed at high levels in hypothalamus and striatum and at lower levels in cerebellum and cortex.

The protein resides in the cytoplasm. It is found in the cell cortex. The protein localises to the cell projection. It localises to the dendritic spine. Functionally, regulates the dendritic spine distribution of CTTN/cortactin in hippocampal neurons, and thus controls dendritic spinogenesis and dendritic spine maintenance. Associates with the striatin-interacting phosphatase and kinase (STRIPAK) core complex to regulate dendritic spine distribution of the STRIPAK complex in hippocampal neurons. This is Cortactin-binding protein 2 (Cttnbp2) from Mus musculus (Mouse).